Here is a 172-residue protein sequence, read N- to C-terminus: Adenine phosphoribosyltransferase (172 aa).

The protein belongs to the purine/pyrimidine phosphoribosyltransferase family. In terms of assembly, homodimer.

The protein resides in the cytoplasm. The enzyme catalyses AMP + diphosphate = 5-phospho-alpha-D-ribose 1-diphosphate + adenine. It functions in the pathway purine metabolism; AMP biosynthesis via salvage pathway; AMP from adenine: step 1/1. Catalyzes a salvage reaction resulting in the formation of AMP, that is energically less costly than de novo synthesis. The chain is Adenine phosphoribosyltransferase from Clostridium acetobutylicum (strain ATCC 824 / DSM 792 / JCM 1419 / IAM 19013 / LMG 5710 / NBRC 13948 / NRRL B-527 / VKM B-1787 / 2291 / W).